Reading from the N-terminus, the 367-residue chain is Nodulation protein NolF (367 aa).

It belongs to the membrane fusion protein (MFP) (TC 8.A.1) family.

Functionally, involved in the production of Medicago-specific nodulation signal molecule. The chain is Nodulation protein NolF (nolF) from Rhizobium meliloti (strain 1021) (Ensifer meliloti).